A 736-amino-acid polypeptide reads, in one-letter code: MLSVNTIKNTLLAAVLVSVPATAQVSGNGHPNLIVTEQDVANIAASWESYDAYAEQLNADKTNLDAFMAEGVVVPMPKDAGGGYTHEQHKRNYKAIRNAGFLYQVTGDEKYLTFAKDLLLAYAKMYPSLGEHPNRKEQSPGRLFWQSLNEAVWLVYSIQGYDAIIDGLAAEEKQEIESGVFLPMAKFLSVESPETFNKIHNHGTWAVAAVGMTGYVLGNDELVEISLMGLDKTGKAGFMKQLDKLFSPDGYYTEGPYYQRYALMPFIWFAKAIETNEPERKIFEYRNNILLKAVYTTIDLSYAGYFFPINDALKDKGIDTVELVHALAIVYSITGDNTLLDIAQEQGRISLTGDGLKVAKAVGEGLTQPYNYRSILLGDGADGDQGALSIHRLGEGHNHMALVAKNTSQGMGHGHFDKLNWLLYDNGNEIVTDYGAARYLNVEAKYGGHYLAENNTWAKQTIAHNTLVVNEQSHFYGDVTTADLHHPEVLSFYSGEDYQLSSAKEANAYDGVEFVRSMLLVNVPSLEHPIVVDVLNVSADKASTFDLPLYFNGQIIDFSFKVKDNKNVMKMLGKRNGYQHLWLRNTAPVGDASERATWILDDRFYSYAFVTSTPSKKQNVLIAELGANDPNYNLRQQQVLIRRVEKAKQASFVSVLEPHGKYDGSLETTSGAYSNVKSVKHVSENGKDVVVVDLKDGSNVVVALSYNANSEQVHKVNAGEEAIEWKGFSSVVVRRK.

The first 23 residues, 1–23 (MLSVNTIKNTLLAAVLVSVPATA), serve as a signal peptide directing secretion. Substrate is bound by residues lysine 136, 146–149 (QSLN), lysine 198, histidine 202, and 257–260 (YYQR). The active-site Proton donor is tyrosine 258. Histidine 413 functions as the Proton acceptor in the catalytic mechanism. The Zn(2+) site is built by histidine 415 and aspartate 433. Residue arginine 438 participates in substrate binding. Histidine 464 contributes to the Zn(2+) binding site. Glutamate 667 is a substrate binding site.

The protein belongs to the polysaccharide lyase 17 family. As to quaternary structure, homodimer. Zn(2+) is required as a cofactor.

It is found in the periplasm. The catalysed reaction is Cleavage of 4-deoxy-alpha-L-erythro-hex-4-enopyranuronoside oligosaccharides into 4-deoxy-alpha-L-erythro-hex-4-enopyranuronate monosaccharides.. In terms of biological role, catalyzes the depolymerization of alginate through an exolytic mode of action, via a beta-elimination mechanism. Preferentially acts on oligoalginates with degrees of polymerization higher than 2 to produce the alginate monomer, 4-deoxy-L-erythro-5-hexoseulose uronic acid. This chain is Exo-oligoalginate lyase, found in Saccharophagus degradans (strain 2-40 / ATCC 43961 / DSM 17024).